The chain runs to 402 residues: Protein DesVIII (402 aa).

This sequence belongs to the cytochrome P450 family. Forms a complex with DesVII.

It participates in antibiotic biosynthesis. Its function is as follows. Involved in the biosynthesis of the macrolide antibiotics methymycin, neomethymycin, narbomycin, and pikromycin. DesVIII assists the folding of the DesVII polypeptide. However, unlike chaperones, it remains bound to DesVII during catalysis, forming a tight DesVII/DesVIII complex. Although the formation of the DesVII/DesVIII complex is essential for the catalytic activity, DesVIII is unlikely to be involved in catalysis directly. This is Protein DesVIII from Streptomyces venezuelae.